The primary structure comprises 471 residues: PE-PGRS family protein PE_PGRS33 (471 aa).

The interval Met1 to Ala30 is essential for translocation to the cell surface. The PE domain maps to Met1–Ala93. An interacts with TLR2 region spans residues Gly140–Gly230.

It belongs to the mycobacterial PE family. PGRS subfamily. In terms of assembly, interacts with human TLR2.

It is found in the secreted. The protein localises to the cell wall. The protein resides in the cell surface. It localises to the cell outer membrane. Its function is as follows. Induces TNF-alpha release through human Toll-like receptor 2 (TLR2) signaling pathway, leading to macrophage apoptosis. The polypeptide is PE-PGRS family protein PE_PGRS33 (PE_PGRS33) (Mycobacterium tuberculosis (strain CDC 1551 / Oshkosh)).